We begin with the raw amino-acid sequence, 178 residues long: Bifunctional protein PyrR (178 aa).

Residues 97-109 (VVLVDDVLYTGRT) carry the PRPP-binding motif.

The protein belongs to the purine/pyrimidine phosphoribosyltransferase family. PyrR subfamily.

The enzyme catalyses UMP + diphosphate = 5-phospho-alpha-D-ribose 1-diphosphate + uracil. In terms of biological role, regulates the transcription of the pyrimidine nucleotide (pyr) operon in response to exogenous pyrimidines. Its function is as follows. Also displays a weak uracil phosphoribosyltransferase activity which is not physiologically significant. The protein is Bifunctional protein PyrR of Herpetosiphon aurantiacus (strain ATCC 23779 / DSM 785 / 114-95).